A 186-amino-acid chain; its full sequence is Elongation factor P (186 aa).

This sequence belongs to the elongation factor P family.

It localises to the cytoplasm. It participates in protein biosynthesis; polypeptide chain elongation. Its function is as follows. Involved in peptide bond synthesis. Stimulates efficient translation and peptide-bond synthesis on native or reconstituted 70S ribosomes in vitro. Probably functions indirectly by altering the affinity of the ribosome for aminoacyl-tRNA, thus increasing their reactivity as acceptors for peptidyl transferase. This is Elongation factor P from Neisseria gonorrhoeae (strain ATCC 700825 / FA 1090).